A 668-amino-acid chain; its full sequence is MYIINLILPLIGSIITGLFGHKLGNKLSIQIAVGCMMLTALSSLYIGYEILLCNSVVHFKLSTWMQVGSLNVEYGLLYDSLTSIMIIVITCISSMVHLYSMDYMKADPHKTRFFSYLSLFTFFMMLLVTADNFVQLFFGWEGVGIMSYLLINFWYTRLQANKSALKAVILNRFGDFGLFFGILLVFLVFKSVDFSVIFTVAPFITEYTINLLGYEVNAITLIGSFIVIGVVGKSAQLGLHMWLPDAMEGPTPVSALLHAATMVTAGVFLVLRTSPLLSYSITILNILTIIGALTTLFATTIGIVQNDIKRVIAYSTCSQLGYMIFACGLLNYNASIYHLTTHAFFKALLFLSAGSVIHGLNDEQDMRKMGGLVNLMPLTYQCMLIGTLALTGFPFLSGYYSKDIILETSYATYYWEGTFAAIIGYVAAFGTTFYSFRLLILTFFNKPRMQYKTIAGVHEASTNMVIPLVILAICSIFIGYLTKDLFVGLGTPIWNNSFFAYPYNNLILESEVLQRELKLLPLFAFIYGVLTPVLFYFNLKEDRMVHLIKNPIAKESYFFFVKKWYFDFLSRVLIAVPFFHLSYDVMNKDLDKGLWEQIGVTGVATALVNEFTEFKLNNEITLSTYISYIVQAILLIIFVGIFSFMIGFLYVELFVILGALYLCLPKIK.

A run of 18 helical transmembrane segments spans residues 1-21, 31-51, 81-101, 111-131, 133-153, 178-198, 211-231, 251-271, 283-303, 311-331, 339-359, 375-395, 421-441, 462-482, 519-539, 566-586, 629-649, and 650-668; these read MYII…LFGH, IAVG…YEIL, LTSI…LYSM, TRFF…VTAD, FVQL…LINF, LFFG…SVIF, LLGY…IGVV, TPVS…FLVL, ILNI…TIGI, VIAY…GLLN, LTTH…VIHG, LMPL…GFPF, AIIG…LLIL, TNMV…GYLT, LLPL…YFNL, FDFL…YDVM, IVQA…IGFL, and YVEL…PKIK.

This sequence belongs to the complex I subunit 5 family.

It localises to the mitochondrion inner membrane. The catalysed reaction is a ubiquinone + NADH + 5 H(+)(in) = a ubiquinol + NAD(+) + 4 H(+)(out). Functionally, core subunit of the mitochondrial membrane respiratory chain NADH dehydrogenase (Complex I) that is believed to belong to the minimal assembly required for catalysis. Complex I functions in the transfer of electrons from NADH to the respiratory chain. The immediate electron acceptor for the enzyme is believed to be ubiquinone. In Dictyostelium citrinum (Slime mold), this protein is NADH-ubiquinone oxidoreductase chain 5 (nad5).